We begin with the raw amino-acid sequence, 280 residues long: Phosphatidylglycerol--prolipoprotein diacylglyceryl transferase (280 aa).

4 consecutive transmembrane segments (helical) span residues 26-46 (LAIHWYGIAYVAGIMLGWFYA), 71-91 (FILWAAGGIVLGGRIGYILFY), 106-126 (IWNGGMSFHGGLIGTTIAMIL), and 132-152 (GIPVWSMFDIIAAVAPIGLLF). A 1,2-diacyl-sn-glycero-3-phospho-(1'-sn-glycerol) is bound at residue arginine 154. 3 helical membrane passes run 193–213 (GLEGLVLVVLLAIAIYVFKAL), 217–237 (GTVTGIFVCGYALSRIFVEFF), and 251–271 (WLTMGMVLSTPMFLLGLWAVL).

The protein belongs to the Lgt family.

The protein localises to the cell inner membrane. The catalysed reaction is L-cysteinyl-[prolipoprotein] + a 1,2-diacyl-sn-glycero-3-phospho-(1'-sn-glycerol) = an S-1,2-diacyl-sn-glyceryl-L-cysteinyl-[prolipoprotein] + sn-glycerol 1-phosphate + H(+). It functions in the pathway protein modification; lipoprotein biosynthesis (diacylglyceryl transfer). Its function is as follows. Catalyzes the transfer of the diacylglyceryl group from phosphatidylglycerol to the sulfhydryl group of the N-terminal cysteine of a prolipoprotein, the first step in the formation of mature lipoproteins. This chain is Phosphatidylglycerol--prolipoprotein diacylglyceryl transferase, found in Agrobacterium fabrum (strain C58 / ATCC 33970) (Agrobacterium tumefaciens (strain C58)).